We begin with the raw amino-acid sequence, 87 residues long: Citrate lyase acyl carrier protein (87 aa).

At S14 the chain carries O-(phosphoribosyl dephospho-coenzyme A)serine.

This sequence belongs to the CitD family. As to quaternary structure, oligomer with a subunit composition of (alpha,beta,gamma)6.

It is found in the cytoplasm. Its function is as follows. Covalent carrier of the coenzyme of citrate lyase. The polypeptide is Citrate lyase acyl carrier protein (Treponema denticola (strain ATCC 35405 / DSM 14222 / CIP 103919 / JCM 8153 / KCTC 15104)).